The primary structure comprises 402 residues: S-adenosylmethionine synthase (402 aa).

Residue Gly140 to Asp145 participates in ATP binding.

This sequence belongs to the AdoMet synthase 2 family. It depends on Mg(2+) as a cofactor.

The enzyme catalyses L-methionine + ATP + H2O = S-adenosyl-L-methionine + phosphate + diphosphate. Its pathway is amino-acid biosynthesis; S-adenosyl-L-methionine biosynthesis; S-adenosyl-L-methionine from L-methionine: step 1/1. In terms of biological role, catalyzes the formation of S-adenosylmethionine from methionine and ATP. This chain is S-adenosylmethionine synthase, found in Picrophilus torridus (strain ATCC 700027 / DSM 9790 / JCM 10055 / NBRC 100828 / KAW 2/3).